Here is a 257-residue protein sequence, read N- to C-terminus: Isoprenyl transferase 1 (257 aa).

The active site involves Asp-37. A Mg(2+)-binding site is contributed by Asp-37. Residues 38–41, Trp-42, His-54, and 82–84 contribute to the substrate site; these read GNRR and STD. The active-site Proton acceptor is the Asn-85. Residues Phe-86, Arg-88, Arg-206, and 212-214 each bind substrate; that span reads RLS. Glu-225 lines the Mg(2+) pocket.

This sequence belongs to the UPP synthase family. In terms of assembly, homodimer. Requires Mg(2+) as cofactor.

Functionally, catalyzes the condensation of isopentenyl diphosphate (IPP) with allylic pyrophosphates generating different type of terpenoids. This is Isoprenyl transferase 1 from Streptomyces avermitilis (strain ATCC 31267 / DSM 46492 / JCM 5070 / NBRC 14893 / NCIMB 12804 / NRRL 8165 / MA-4680).